The following is a 356-amino-acid chain: UDP-N-acetylglucosamine--N-acetylmuramyl-(pentapeptide) pyrophosphoryl-undecaprenol N-acetylglucosamine transferase (356 aa).

Serine 198 and glutamine 289 together coordinate UDP-N-acetyl-alpha-D-glucosamine.

This sequence belongs to the glycosyltransferase 28 family. MurG subfamily.

Its subcellular location is the cell membrane. It carries out the reaction Mur2Ac(oyl-L-Ala-gamma-D-Glu-L-Lys-D-Ala-D-Ala)-di-trans,octa-cis-undecaprenyl diphosphate + UDP-N-acetyl-alpha-D-glucosamine = beta-D-GlcNAc-(1-&gt;4)-Mur2Ac(oyl-L-Ala-gamma-D-Glu-L-Lys-D-Ala-D-Ala)-di-trans,octa-cis-undecaprenyl diphosphate + UDP + H(+). The protein operates within cell wall biogenesis; peptidoglycan biosynthesis. In terms of biological role, cell wall formation. Catalyzes the transfer of a GlcNAc subunit on undecaprenyl-pyrophosphoryl-MurNAc-pentapeptide (lipid intermediate I) to form undecaprenyl-pyrophosphoryl-MurNAc-(pentapeptide)GlcNAc (lipid intermediate II). The polypeptide is UDP-N-acetylglucosamine--N-acetylmuramyl-(pentapeptide) pyrophosphoryl-undecaprenol N-acetylglucosamine transferase (Streptococcus thermophilus (strain ATCC BAA-491 / LMD-9)).